Here is a 580-residue protein sequence, read N- to C-terminus: G1/S-specific cyclin CLN3 (580 aa).

The segment covering 454–469 (FTPTSSSSSPSPFNSP) has biased composition (low complexity). 2 disordered regions span residues 454 to 498 (FTPT…QNSF) and 546 to 580 (MATA…KKTR). Polar residues-rich tracts occupy residues 470–480 (YKTSSSMTTPD) and 563–580 (TSSV…KKTR).

It belongs to the cyclin family.

Essential for the control of the cell cycle at the G1/S (start) transition. CLN3 may be an upstream activator of the G1 cyclins which directly catalyze start. This chain is G1/S-specific cyclin CLN3 (CLN3), found in Saccharomyces cerevisiae (strain ATCC 204508 / S288c) (Baker's yeast).